A 1085-amino-acid polypeptide reads, in one-letter code: Carbamoyl phosphate synthase large chain (1085 aa).

The interval Met1–Glu399 is carboxyphosphate synthetic domain. Residues Arg127, Arg167, Gly174, Glu206, Leu208, Glu213, Gly239, Val240, His241, Gln283, and Glu297 each coordinate ATP. An ATP-grasp 1 domain is found at Lys131–Val326. Mg(2+) contacts are provided by Gln283, Glu297, and Asn299. Residues Gln283, Glu297, and Asn299 each coordinate Mn(2+). The oligomerization domain stretch occupies residues Asn400–Asn552. The interval Lys553–Phe951 is carbamoyl phosphate synthetic domain. The 194-residue stretch at Ser678 to Val871 folds into the ATP-grasp 2 domain. ATP is bound by residues Arg714, Lys756, Leu758, Glu763, Gly788, Ile789, His790, Ser791, Gln830, and Glu842. Residues Gln830, Glu842, and Asn844 each coordinate Mg(2+). Mn(2+) is bound by residues Gln830, Glu842, and Asn844. Residues Asn952–Lys1085 form the MGS-like domain. The segment at Asn952–Lys1085 is allosteric domain.

This sequence belongs to the CarB family. In terms of assembly, composed of two chains; the small (or glutamine) chain promotes the hydrolysis of glutamine to ammonia, which is used by the large (or ammonia) chain to synthesize carbamoyl phosphate. Tetramer of heterodimers (alpha,beta)4. Mg(2+) is required as a cofactor. Requires Mn(2+) as cofactor.

The enzyme catalyses hydrogencarbonate + L-glutamine + 2 ATP + H2O = carbamoyl phosphate + L-glutamate + 2 ADP + phosphate + 2 H(+). It catalyses the reaction hydrogencarbonate + NH4(+) + 2 ATP = carbamoyl phosphate + 2 ADP + phosphate + 2 H(+). It functions in the pathway amino-acid biosynthesis; L-arginine biosynthesis; carbamoyl phosphate from bicarbonate: step 1/1. It participates in pyrimidine metabolism; UMP biosynthesis via de novo pathway; (S)-dihydroorotate from bicarbonate: step 1/3. Functionally, large subunit of the glutamine-dependent carbamoyl phosphate synthetase (CPSase). CPSase catalyzes the formation of carbamoyl phosphate from the ammonia moiety of glutamine, carbonate, and phosphate donated by ATP, constituting the first step of 2 biosynthetic pathways, one leading to arginine and/or urea and the other to pyrimidine nucleotides. The large subunit (synthetase) binds the substrates ammonia (free or transferred from glutamine from the small subunit), hydrogencarbonate and ATP and carries out an ATP-coupled ligase reaction, activating hydrogencarbonate by forming carboxy phosphate which reacts with ammonia to form carbamoyl phosphate. The sequence is that of Carbamoyl phosphate synthase large chain from Helicobacter pylori (strain ATCC 700392 / 26695) (Campylobacter pylori).